The chain runs to 109 residues: MFTEQVLNVIILLQTATVTATAIPASGCNAGDVQCCKSVQKADSAGGAALLGLVGIVLSNLDVFIGGDCSPITAIGVGGTSCSSQAVCCENNSFNGLIALGCVPINLSL.

A signal peptide spans 1-20 (MFTEQVLNVIILLQTATVTA). Intrachain disulfides connect C28–C88, C35–C82, C36–C69, and C89–C102. Residues N91 and N106 are each glycosylated (N-linked (GlcNAc...) asparagine).

It belongs to the fungal hydrophobin family. In terms of assembly, self-assembles to form functional amyloid fibrils called rodlets. Self-assembly into fibrillar rodlets occurs spontaneously at hydrophobic:hydrophilic interfaces and the rodlets further associate laterally to form amphipathic monolayers.

It is found in the secreted. The protein resides in the cell wall. Its function is as follows. Aerial growth, conidiation, and dispersal of filamentous fungi in the environment rely upon a capability of their secreting small amphipathic proteins called hydrophobins (HPBs) with low sequence identity. Class I can self-assemble into an outermost layer of rodlet bundles on aerial cell surfaces, conferring cellular hydrophobicity that supports fungal growth, development and dispersal; whereas Class II form highly ordered films at water-air interfaces through intermolecular interactions but contribute nothing to the rodlet structure. This Pleurotus ostreatus (strain PC15) (Oyster mushroom) protein is Class I hydrophobin 18.